The primary structure comprises 149 residues: 3-hydroxyacyl-[acyl-carrier-protein] dehydratase FabZ (149 aa).

His52 is a catalytic residue.

The protein belongs to the thioester dehydratase family. FabZ subfamily.

The protein localises to the cytoplasm. The enzyme catalyses a (3R)-hydroxyacyl-[ACP] = a (2E)-enoyl-[ACP] + H2O. Its function is as follows. Involved in unsaturated fatty acids biosynthesis. Catalyzes the dehydration of short chain beta-hydroxyacyl-ACPs and long chain saturated and unsaturated beta-hydroxyacyl-ACPs. The polypeptide is 3-hydroxyacyl-[acyl-carrier-protein] dehydratase FabZ (Cupriavidus necator (strain ATCC 17699 / DSM 428 / KCTC 22496 / NCIMB 10442 / H16 / Stanier 337) (Ralstonia eutropha)).